The following is a 267-amino-acid chain: Protein TIFY 7 (267 aa).

The region spanning 113–148 (SSGSSPQLTIFYGGTISVFNDISPDKAQAIMLCAGN) is the Tify domain. Positions 220-244 (PQARKASLARFLEKRKERLMSAMPY) match the Jas motif. A Nuclear localization signal motif is present at residues 222–229 (ARKASLAR).

It belongs to the TIFY/JAZ family. In terms of assembly, homo- and heterodimer. Interacts with MYC2, MYC3, MYC4, COI1, AFPH2/NINJA, TIFY10A/JAZ1, TIFY10B/JAZ2, TIFY6B/JAZ3, TIFY5A/JAZ8, TIFY9/JAZ10 and TIFY3A/JAZ11. Interacts with RHD6 and RSL1. Post-translationally, ubiquitinated. Targeted for degradation by the SCF(COI1) E3 ubiquitin ligase-proteasome pathway during jasmonate signaling.

It localises to the nucleus. Its function is as follows. Repressor of jasmonate responses. Jasmonoyl-isoleucine (JA-Ile) specifically promotes COI1-TIFY7/JAZ9 interaction. Interacts with and suppresses RHD6 and RSL1 transcription factor activities to negatively regulate jasmonate-stimulated root hair development. The protein is Protein TIFY 7 (TIFY7) of Arabidopsis thaliana (Mouse-ear cress).